The following is a 513-amino-acid chain: Quiannulatic acid synthase (513 aa).

The helical transmembrane segment at 14-34 threads the bilayer; it reads VFTFCNIILALASLVVAQCVY. Asn308 carries an N-linked (GlcNAc...) asparagine glycan. Residue Cys477 participates in heme binding.

This sequence belongs to the cytochrome P450 family. It depends on heme as a cofactor.

Its subcellular location is the membrane. The catalysed reaction is quiannulatene + 3 reduced [NADPH--hemoprotein reductase] + 3 O2 = quiannulatate + 3 oxidized [NADPH--hemoprotein reductase] + 4 H2O + 4 H(+). It functions in the pathway secondary metabolite biosynthesis; terpenoid biosynthesis. Cytochrome P450 monooxygenase; part of the gene cluster that mediates the biosynthesis of the pentacyclic sesterterpene quiannulatic acid. The first step of the pathway is performed by the sesterterpene synthase (QS) that possesses both prenyl transferase and terpene cyclase activity, converting isopentenyl diphosphate and dimethylallyl diphosphate into geranylfarnesyl diphosphate (GFPP) and further converting GFPP into quiannulatene via an unprecedented cyclization mode which involves three rounds of hydride shifts and two successive C-C bond migrations to construct the 5-6-5-5-5 fused ring. The cytochrome P450 monooxygenase Qnn-P450 then oxidizes quiannulatene at C-19 in 3 successive reactions to afford quiannulatic acid. This is Quiannulatic acid synthase from Emericella variicolor (Aspergillus stellatus).